Here is a 32-residue protein sequence, read N- to C-terminus: Dermaseptin-DA4 (32 aa).

As to expression, expressed by the skin glands.

It is found in the secreted. The protein resides in the target cell membrane. In terms of biological role, antimicrobial peptide with activity against Gram-negative bacteria, but not against Gram-positive bacteria. Active against E.coli (MIC=5 uM), and P.aeruginosa (MIC=40 uM). Acts by disrupting cell membranes. Is able to depolarize membranes of Gram-positive and Gram-negative bacteria. Also acts as a potent chemoattractant for human leukocytes and activates them mainly through a GPCR, possibly FPRL1 coupled to the ERK1/2 MAPK pathway. Is unstructured in water but become helical upon binding to anionic lipids. In contrast to most dermaseptins, is not structured in the presence of zwitterionic lipids. Does not show hemolytic activity. The chain is Dermaseptin-DA4 from Agalychnis dacnicolor (Giant Mexican leaf frog).